Consider the following 171-residue polypeptide: CASP-like protein 5A2 (171 aa).

The Cytoplasmic segment spans residues 1–39; sequence MDGSAHLRDPPGPAVLRWRLEDMHIIPGTSGSLALRICQ. A helical membrane pass occupies residues 40–60; sequence FSAAIVSFSVMISAANFSSVT. Position 61 (alanine 61) is a topological domain, extracellular. The chain crosses the membrane as a helical span at residues 62 to 82; sequence FCFLVAAMVLQCMWSLSVATI. Residues 83 to 106 lie on the Cytoplasmic side of the membrane; sequence EGYAMLVGRSLRDSPLLSLFAVGD. A helical membrane pass occupies residues 107-127; that stretch reads WVTAVITFAGACASAGIAVLV. The Extracellular segment spans residues 128–148; the sequence is GRDIHRGCDVNFCGRYAAAAG. The helical transmembrane segment at 149 to 169 threads the bilayer; the sequence is MAFLSWLLISTSFLFTFWLLA. The Cytoplasmic segment spans residues 170-171; it reads TR.

Belongs to the Casparian strip membrane proteins (CASP) family. Homodimer and heterodimers.

The protein resides in the cell membrane. This is CASP-like protein 5A2 from Pteridium aquilinum subsp. aquilinum (Bracken fern).